We begin with the raw amino-acid sequence, 78 residues long: Acyl carrier protein (78 aa).

A Carrier domain is found at 2-77 (DDLFKKIQQL…DAYEFIKSQQ (76 aa)). Ser37 is subject to O-(pantetheine 4'-phosphoryl)serine.

This sequence belongs to the acyl carrier protein (ACP) family. Post-translationally, 4'-phosphopantetheine is transferred from CoA to a specific serine of apo-ACP by AcpS. This modification is essential for activity because fatty acids are bound in thioester linkage to the sulfhydryl of the prosthetic group.

The protein resides in the cytoplasm. Its pathway is lipid metabolism; fatty acid biosynthesis. Carrier of the growing fatty acid chain in fatty acid biosynthesis. The protein is Acyl carrier protein of Treponema denticola (strain ATCC 35405 / DSM 14222 / CIP 103919 / JCM 8153 / KCTC 15104).